We begin with the raw amino-acid sequence, 20 residues long: Brevinin-1SPb (20 aa).

Cys14 and Cys20 are disulfide-bonded.

Expressed by the skin glands.

The protein resides in the secreted. Antimicrobial peptide with activity against Gram-negative and Gram-positive bacteria (MIC=50 uM against E.coli, MIC=6 uM against S.aureus) and fungi (MIC=13 uM against C.albicans). Shows hemolytic activity on human erythrocytes (HC(50)=25 uM). This chain is Brevinin-1SPb, found in Lithobates septentrionalis (Mink frog).